The chain runs to 628 residues: Glutamyl-tRNA(Gln) amidotransferase subunit E (628 aa).

It belongs to the GatB/GatE family. GatE subfamily. In terms of assembly, heterodimer of GatD and GatE.

The enzyme catalyses L-glutamyl-tRNA(Gln) + L-glutamine + ATP + H2O = L-glutaminyl-tRNA(Gln) + L-glutamate + ADP + phosphate + H(+). Allows the formation of correctly charged Gln-tRNA(Gln) through the transamidation of misacylated Glu-tRNA(Gln) in organisms which lack glutaminyl-tRNA synthetase. The reaction takes place in the presence of glutamine and ATP through an activated gamma-phospho-Glu-tRNA(Gln). The GatDE system is specific for glutamate and does not act on aspartate. The sequence is that of Glutamyl-tRNA(Gln) amidotransferase subunit E from Thermococcus gammatolerans (strain DSM 15229 / JCM 11827 / EJ3).